Reading from the N-terminus, the 128-residue chain is Con-Ins F2 (128 aa).

The signal sequence occupies residues 1–24 (MTTSSYFLLVALGLLLYVCRSSFG). Intrachain disulfides connect Cys29–Cys104, Cys41–Cys107, Cys53–Cys120, and Cys106–Cys111. Positions 59 to 89 (LQGGTGKKRGRASLLRKRRAFLSMLKARAKR) are cleaved as a propeptide — c peptide. Position 115 is a 4-carboxyglutamate; partial (Glu115). Serine amide is present on Ser127.

Belongs to the insulin family. In terms of assembly, heterodimer of A and B chains; disulfide-linked. As to expression, expressed by the venom gland.

The protein localises to the secreted. Its function is as follows. This venom insulin facilitates prey capture by rapidly inducing hypoglycemic shock. Intraperitoneal injection of this peptide into zebrafish lowers blood glucose with the same potency than human insulin. In vivo, when applied to water, this peptide reduces overall locomotor activity of zebrafish larvae, observed as a significant decrease in the percentage of time spent swimming and movement frequency. The polypeptide is Con-Ins F2 (Conus floridulus (Cone snail)).